The chain runs to 926 residues: MVSSLLPNPPSAECWAALLHDPMTLDMDAVLSDFVRSTGAEPGLARDLLEGKNWDLTAALSDYEQLRQVHTANLPHVFNEGRCAKQAERELPQPGHKVERPCLQRQDDIAQAEKRLSRGISHASSAIVSLARSHVANECNNEQFPLEMPIYTFQLPDLSVYSEDFRSFIERDLIEQATMVALEQAGRLNWWSTVCTSCKRLLPLATTGDGNCLLHAASLGMWGFHDRDLVLRKALYTMMRTGAEREALKRRWRWQQTQQNKEEEWEREWTELLKLASSEPRTHFSKNGSGTGGGVDNSEDPVYESLEEFHVFVLAHILRRPIVVVADTMLRDSGGEAFAPIPFGGIYLPLEVPPNRCHCSPLVLAYDQAHFSALVSMEQRDQQREQAVIPLTDSEHKLLPLHFAVDPGKDWEWGKDDNDNARLANLILSLEAKLNLLHSYMNVTWIRIPSETRAPLAQPESPTASAGEDVQSLAESLDSDRDSVCSNSNSNNGKNGKDKEKEKQRKDKDKTRADSVANKLGSFSKTLGIKLKKNMGGLGGLVHGKMGRANSANGKNGDSAERNKEKKSKSRKGSKEESGASASTSPSEKTTPSPTDKASGASPADKGSGSRGDAWKYSTDVKLSLNILRAAMQGERKFIFAGLLLTSHRHQFHEEMIGYYLTSAQERFSAEQEQRRRDAAAAAAAATATATVKRPARRPEAEGAPGPERASPGPTAAQPTQLVLKLKERPSPGTGASARAARAAGGAASPGPGGGARRAAPGTGGPTPGRSPPAPARQSVIHVQAAARDEACAPTVGALRPCATYPQQNRSLWSQSYSPARSALRTVNTVESLAPGGADAPGPAEHKSQTYSNGFGAARDGLEFADADAPAARSNAECGRGGPGPAQRRCQRENCAFYGRAETEHFCSYCYREELRRRREARAARP.

Ser-121 is modified (phosphoserine). Residues Glu-170–Trp-413 form a TRAF-binding region. The segment at Ala-185–Thr-452 is catalytic. In terms of domain architecture, OTU spans Leu-201–Met-377. Asp-209 is a catalytic residue. Catalysis depends on Cys-212, which acts as the Nucleophile. His-370 (proton acceptor) is an active-site residue. Disordered regions lie at residues Pro-455–Ala-517, Gly-540–Trp-615, and Glu-671–Ser-779. The span at Val-484–Lys-494 shows a compositional bias: low complexity. Positions Asn-495–Ala-513 are enriched in basic and acidic residues. The short motif at Lys-497 to Arg-512 is the Nuclear localization signal element. 3 stretches are compositionally biased toward low complexity: residues Gly-579–Thr-595, Ala-680–Thr-691, and Ser-731–Pro-750. Gly residues predominate over residues Gly-751 to Thr-767. Arg-880 bears the Omega-N-methylarginine mark. Residues Gly-884–Arg-919 form an A20-type zinc finger. Residues Cys-890, Cys-895, Cys-907, and Cys-910 each coordinate Zn(2+).

This sequence belongs to the peptidase C64 family.

The protein resides in the cytoplasm. The protein localises to the nucleus. It carries out the reaction Thiol-dependent hydrolysis of ester, thioester, amide, peptide and isopeptide bonds formed by the C-terminal Gly of ubiquitin (a 76-residue protein attached to proteins as an intracellular targeting signal).. Its function is as follows. Deubiquitinase, which cleaves 'Lys-11'-linked polyubiquitin chains. This Mus musculus (Mouse) protein is OTU domain-containing protein 7A (Otud7a).